The sequence spans 317 residues: Flavin-dependent thymidylate synthase (317 aa).

S46 lines the FAD pocket. The segment at 55–166 is insert; the sequence is FEWKKEKWIE…ELETDMDFYT (112 aa). The ThyX domain maps to 100-317; the sequence is AVKERIKEAF…YRGTDKKNVI (218 aa). DUMP contacts are provided by residues 178–181, 189–193, and R259; these read QWMR and EVSKR. FAD contacts are provided by residues 181-183 and E189; that span reads RHR. Positions 181-191 match the ThyX motif motif; that stretch reads RHRFGSYNEVS. N281 contributes to the FAD binding site. R286 provides a ligand contact to dUMP. The active-site Involved in ionization of N3 of dUMP, leading to its activation is the R286.

The protein belongs to the thymidylate synthase ThyX family. Homotetramer. FAD serves as cofactor.

It catalyses the reaction dUMP + (6R)-5,10-methylene-5,6,7,8-tetrahydrofolate + NADPH + H(+) = dTMP + (6S)-5,6,7,8-tetrahydrofolate + NADP(+). It participates in pyrimidine metabolism; dTTP biosynthesis. Catalyzes the reductive methylation of 2'-deoxyuridine-5'-monophosphate (dUMP) to 2'-deoxythymidine-5'-monophosphate (dTMP) while utilizing 5,10-methylenetetrahydrofolate (mTHF) as the methyl donor, and NADPH and FADH(2) as the reductant. The sequence is that of Flavin-dependent thymidylate synthase from Aquifex aeolicus (strain VF5).